The primary structure comprises 303 residues: MEENYKLSHLRELEAESIHIIREVAAEFENPVMLYSIGKDSSVMVRLAEKAFYPGKVPFPLMHIDSKWKFREMIEFRDQYAKEHGWNLIVESNMEAFNAGVGPFTHGSKVHTDLMKTQALLHGLDKYRFDAAFGGARRDEEKSRAKERIFSFRDRFHQWDPKNQRPELWDIYNAKIHKGESIRVFPLSNWTELDIWQYIRLENIPIVPLYFAKERPVVNIDGNLIMADDDRLPEEYRDRIEMKKVRFRTLGCWPLTGAVESDADTIEKIVEEMMTTTKSERTTRVIDFDQDASMEQKKREGYF.

It belongs to the PAPS reductase family. CysD subfamily. In terms of assembly, heterodimer composed of CysD, the smaller subunit, and CysN.

It catalyses the reaction sulfate + ATP + H(+) = adenosine 5'-phosphosulfate + diphosphate. Its pathway is sulfur metabolism; hydrogen sulfide biosynthesis; sulfite from sulfate: step 1/3. Functionally, with CysN forms the ATP sulfurylase (ATPS) that catalyzes the adenylation of sulfate producing adenosine 5'-phosphosulfate (APS) and diphosphate, the first enzymatic step in sulfur assimilation pathway. APS synthesis involves the formation of a high-energy phosphoric-sulfuric acid anhydride bond driven by GTP hydrolysis by CysN coupled to ATP hydrolysis by CysD. The polypeptide is Sulfate adenylyltransferase subunit 2 (Phocaeicola vulgatus (strain ATCC 8482 / DSM 1447 / JCM 5826 / CCUG 4940 / NBRC 14291 / NCTC 11154) (Bacteroides vulgatus)).